Here is a 302-residue protein sequence, read N- to C-terminus: Zinc finger protein-like 1 homolog (302 aa).

The segment at 1-43 (MGLCKCPKRLVTNQFCFEHRVNVCEHCMVQSHPKCIVQSYLQW) adopts a B box-type; degenerate zinc-finger fold. An RING-type; atypical zinc finger spans residues 53 to 101 (CNLCGTSLEQGECVRLVCYHVFHWDCLNARQAALPANTAPRGHQCPGCS). Residues 168–233 (IHSGGERERG…RDDNKYQRRT (66 aa)) form a disordered region. The segment covering 198-208 (PPSSGDFNASS) has biased composition (polar residues). Ser-217 is modified (phosphoserine). The helical transmembrane segment at 258 to 278 (WFLVLSGILAFVMFIYLLAWM) threads the bilayer.

This sequence belongs to the ZFPL1 family.

Its subcellular location is the membrane. The protein is Zinc finger protein-like 1 homolog of Drosophila pseudoobscura pseudoobscura (Fruit fly).